We begin with the raw amino-acid sequence, 82 residues long: Small ribosomal subunit protein bS18 (82 aa).

The protein belongs to the bacterial ribosomal protein bS18 family. As to quaternary structure, part of the 30S ribosomal subunit. Forms a tight heterodimer with protein bS6.

Binds as a heterodimer with protein bS6 to the central domain of the 16S rRNA, where it helps stabilize the platform of the 30S subunit. In Bifidobacterium adolescentis (strain ATCC 15703 / DSM 20083 / NCTC 11814 / E194a), this protein is Small ribosomal subunit protein bS18.